Consider the following 184-residue polypeptide: Large ribosomal subunit protein uL6 (184 aa).

Belongs to the universal ribosomal protein uL6 family. In terms of assembly, part of the 50S ribosomal subunit.

Its function is as follows. This protein binds to the 23S rRNA, and is important in its secondary structure. It is located near the subunit interface in the base of the L7/L12 stalk, and near the tRNA binding site of the peptidyltransferase center. The chain is Large ribosomal subunit protein uL6 from Thermomicrobium roseum (strain ATCC 27502 / DSM 5159 / P-2).